The primary structure comprises 332 residues: Melanocortin receptor 4 (332 aa).

Topologically, residues 1-43 (MNSTHHHGMYTSLHLWNRSSYGLHGNASESLGKGHPDGGCYEQ) are extracellular. 3 N-linked (GlcNAc...) asparagine glycosylation sites follow: Asn2, Asn17, and Asn26. 2 disulfides stabilise this stretch: Cys40–Cys279 and Cys271–Cys277. A helical transmembrane segment spans residues 44–69 (LFVSPEVFVTLGVISLLENILVIVAI). Over 70–81 (AKNKNLHSPMYF) the chain is Cytoplasmic. A helical transmembrane segment spans residues 82 to 106 (FICSLAVADMLVSVSNGSETIVITL). Residue Glu100 coordinates Ca(2+). Residues 107–123 (LNSTDTDAQSFTVNIDN) lie on the Extracellular side of the membrane. A glycan (N-linked (GlcNAc...) asparagine) is linked at Asn108. Asp122 and Asp126 together coordinate Ca(2+). A helical membrane pass occupies residues 124–145 (VIDSVICSSLLASICSLLSIAV). Topologically, residues 146–165 (DRYFTIFYALQYHNIMTVRR) are cytoplasmic. A helical membrane pass occupies residues 166 to 186 (VGIIISCIWAACTVSGVLFII). At 187 to 191 (YSDSS) the chain is on the extracellular side. Residues 192–215 (AVIICLISMFFTMLVLMASLYVHM) form a helical membrane-spanning segment. The Cytoplasmic portion of the chain corresponds to 216–248 (FLMARLHIKRIAVLPGTGTIRQGTNMKGAITLT). Residues 249–271 (ILIGVFVVCWAPFFLHLLFYISC) form a helical membrane-spanning segment. Topologically, residues 272-280 (PQNPYCVCF) are extracellular. Residues 281 to 304 (MSHFNLYLILIMCNAVIDPLIYAL) form a helical membrane-spanning segment. Residues 305–332 (RSQELRKTFKEIICFYPLGGICELSSRY) lie on the Cytoplasmic side of the membrane. Residue Cys318 is the site of S-palmitoyl cysteine attachment.

It belongs to the G-protein coupled receptor 1 family. Homodimer; disulfide-linked, also forms higher order oligomers. Interacts with GNAS. Interacts with ATRNL1. Interacts with MGRN1; this interaction competes with GNAS-binding and thus inhibits agonist-induced cAMP production. Interacts with MRAP and MRAP2; these associated factors increase ligand-sensitivity and generation of cAMP.

Its subcellular location is the cell membrane. Hormone receptor that acts as a key component of the leptin-melanocortin pathway at the intersection of homeostatic maintenance of energetic state. Plays a role in regulating food intake: activation by a stimulating hormone such as anorexigenic alpha-melanocyte stimulating hormone (alpha-MSH) inhibits appetite, whereas binding to a natural antagonist like Agouti-related protein/AGRP promotes appetite. G-protein-coupled receptor that activates conventional Galphas signaling leading to induction of anorexogenic signaling in the hypothalamus to result in negative energy balance. Regulates the firing activity of neurons from the hypothalamus by alpha-MSH and AGRP independently of Galphas signaling by ligand-induced coupling of closure of inwardly rectifying potassium channel KCNJ13. In intestinal epithelial cells, plays a role in the inhibition of hepatic glucose production via nesfatin-1/NUCB2 leading to increased cyclic adenosine monophosphate (cAMP) levels and glucagon-like peptide 1 (GLP-1) secretion in the intestinal epithelium. In Mus musculus (Mouse), this protein is Melanocortin receptor 4 (Mc4r).